The chain runs to 161 residues: ATP synthase subunit b (161 aa).

The helical transmembrane segment at 10–29 (AVVQLLNFLFLLWILNKLLY) threads the bilayer.

This sequence belongs to the ATPase B chain family. In terms of assembly, F-type ATPases have 2 components, F(1) - the catalytic core - and F(0) - the membrane proton channel. F(1) has five subunits: alpha(3), beta(3), gamma(1), delta(1), epsilon(1). F(0) has three main subunits: a(1), b(2) and c(10-14). The alpha and beta chains form an alternating ring which encloses part of the gamma chain. F(1) is attached to F(0) by a central stalk formed by the gamma and epsilon chains, while a peripheral stalk is formed by the delta and b chains.

The protein localises to the cell inner membrane. F(1)F(0) ATP synthase produces ATP from ADP in the presence of a proton or sodium gradient. F-type ATPases consist of two structural domains, F(1) containing the extramembraneous catalytic core and F(0) containing the membrane proton channel, linked together by a central stalk and a peripheral stalk. During catalysis, ATP synthesis in the catalytic domain of F(1) is coupled via a rotary mechanism of the central stalk subunits to proton translocation. Its function is as follows. Component of the F(0) channel, it forms part of the peripheral stalk, linking F(1) to F(0). The sequence is that of ATP synthase subunit b from Fervidobacterium nodosum (strain ATCC 35602 / DSM 5306 / Rt17-B1).